The chain runs to 119 residues: Small ribosomal subunit protein eS25 (119 aa).

The tract at residues 1–42 (MPPKKDTKASAKQPQKTQKKKEGSGGGKAKKKKWSKGKVRDK) is disordered. Residues 28-37 (KAKKKKWSKG) show a composition bias toward basic residues.

Belongs to the eukaryotic ribosomal protein eS25 family.

In Spodoptera frugiperda (Fall armyworm), this protein is Small ribosomal subunit protein eS25 (RpS25).